The chain runs to 395 residues: GPI-anchor transamidase (395 aa).

Positions 1–27 (MAVTDSLSRAATVLATVLLLSFGSVAA) are cleaved as a signal peptide. Residues 28–368 (SHIEDQAEQF…PKLKDWHPPG (341 aa)) are Lumenal-facing. Ca(2+) contacts are provided by Asp79, Ile82, Glu118, and Asp120. His164 serves as the catalytic Proton donor. Cys206 acts as the Nucleophile; acyl-thioester intermediate in catalysis. Positions 206, 232, and 234 each coordinate a protein. The tract at residues 231 to 236 (DSLSHQ) is autoinhibitory loop. Cys275 and Cys280 are oxidised to a cystine. The chain crosses the membrane as a helical span at residues 369-385 (GFILGLWALIIMVFFKT). Topologically, residues 386 to 395 (YGIKHMKFIF) are cytoplasmic.

The protein belongs to the peptidase C13 family. In terms of assembly, heteropentamer. Part of the GPI-anchor transamidase complex, consisting of PIGK, PIGT, PIGS, PIGU and GAA1. Interacts with GPAA1. Interacts with PIGT; this interaction, via a disulfide link, stabilizes the expression of GAA1 and PIGK and links them to PIGS. In terms of processing, the disulfide bond between PIGK/GPI8 and PIGT is important for normal enzyme activity.

It localises to the endoplasmic reticulum membrane. Its pathway is glycolipid biosynthesis; glycosylphosphatidylinositol-anchor biosynthesis. In the absence of proproteins substrates, exists in an inactive state with a disrupted catalytic site by an autoinhibitory loop. The binding of proprotein substrates, particularly the CSP region, to GPI-T triggers concerted conformational changes that alleviate the inhibition by the autoinhibitory loop. Meanwhile, proprotein residues near the omega- site induce the formation of a catalytic cleft for catalysis, following which the products are released and GPI-T reverts to the inactive state. In terms of biological role, catalytic subunit of the glycosylphosphatidylinositol-anchor (GPI-anchor) transamidase (GPI-T) complex that catalyzes the formation of the linkage between a proprotein and a GPI-anchor and participates in GPI anchored protein biosynthesis. Recognizes diverse proproteins at a C-terminal signal peptide (CSP) region that lacks consensus sequence and replaces it with a GPI-anchor via a transamidation reaction. Transamidation catalysis reaction follows a two-phase mechanism. In the acyl-enzyme phase, the carbonyl group of the proproteins's omega-site undergoes a nucleophilic attack forming an enzyme-substrate thioester bond. Followed by a general acid catalysis that allows CSP releasing, regenerating the carbonyl, and forming the acyl-enzyme intermediate. In the GPI-anchor attachment phase, the amino group of the GPI-anchor's ethanolamine phosphate, the one on third mannose (EtNP3), mediates a nucleophilic attack on the carbonyl of the acyl-enzyme intermediate, replacing the CSP, allowing GPI-anchor attachment to the omega-residue, therefore forming the product and freeing the enzyme. The protein is GPI-anchor transamidase of Homo sapiens (Human).